Reading from the N-terminus, the 121-residue chain is Small ribosomal subunit protein uS13 (121 aa).

Residues 91 to 121 are disordered; the sequence is HRMSLPVRGQRTRTNARTRRGSRKTVAGRKK. The segment covering 100–121 has biased composition (basic residues); that stretch reads QRTRTNARTRRGSRKTVAGRKK.

The protein belongs to the universal ribosomal protein uS13 family. As to quaternary structure, part of the 30S ribosomal subunit. Forms a loose heterodimer with protein S19. Forms two bridges to the 50S subunit in the 70S ribosome.

In terms of biological role, located at the top of the head of the 30S subunit, it contacts several helices of the 16S rRNA. In the 70S ribosome it contacts the 23S rRNA (bridge B1a) and protein L5 of the 50S subunit (bridge B1b), connecting the 2 subunits; these bridges are implicated in subunit movement. Contacts the tRNAs in the A and P-sites. The protein is Small ribosomal subunit protein uS13 of Prochlorococcus marinus (strain AS9601).